The chain runs to 106 residues: Pyrimidine/purine nucleoside phosphorylase (106 aa).

This sequence belongs to the nucleoside phosphorylase PpnP family.

It carries out the reaction a purine D-ribonucleoside + phosphate = a purine nucleobase + alpha-D-ribose 1-phosphate. The enzyme catalyses adenosine + phosphate = alpha-D-ribose 1-phosphate + adenine. The catalysed reaction is cytidine + phosphate = cytosine + alpha-D-ribose 1-phosphate. It catalyses the reaction guanosine + phosphate = alpha-D-ribose 1-phosphate + guanine. It carries out the reaction inosine + phosphate = alpha-D-ribose 1-phosphate + hypoxanthine. The enzyme catalyses thymidine + phosphate = 2-deoxy-alpha-D-ribose 1-phosphate + thymine. The catalysed reaction is uridine + phosphate = alpha-D-ribose 1-phosphate + uracil. It catalyses the reaction xanthosine + phosphate = alpha-D-ribose 1-phosphate + xanthine. Functionally, catalyzes the phosphorolysis of diverse nucleosides, yielding D-ribose 1-phosphate and the respective free bases. Can use uridine, adenosine, guanosine, cytidine, thymidine, inosine and xanthosine as substrates. Also catalyzes the reverse reactions. The polypeptide is Pyrimidine/purine nucleoside phosphorylase (Burkholderia ambifaria (strain MC40-6)).